A 457-amino-acid chain; its full sequence is Glycine receptor subunit alpha-1 (457 aa).

The first 28 residues, 1–28, serve as a signal peptide directing secretion; the sequence is MYSFNTLRLYLWETIVFFSLAASKEAEA. Residues 29 to 250 lie on the Extracellular side of the membrane; the sequence is ARSASKPMSP…RFHLERQMGY (222 aa). N66 carries N-linked (GlcNAc...) asparagine glycosylation. R93 and S157 together coordinate glycine. Cysteines 166 and 180 form a disulfide. Zn(2+) contacts are provided by E220 and D222. C226 and C237 are joined by a disulfide. 230-235 lines the strychnine pocket; the sequence is YNTGKF. T232 contributes to the glycine binding site. H243 serves as a coordination point for Zn(2+). The helical transmembrane segment at 251 to 272 threads the bilayer; that stretch reads YLIQMYIPSLLIVILSWISFWI. At 273–277 the chain is on the cytoplasmic side; that stretch reads NMDAA. Residues 278-298 form a helical membrane-spanning segment; that stretch reads PARVGLGITTVLTMTTQSSGS. The Extracellular portion of the chain corresponds to 299 to 309; sequence RASLPKVSYVK. A helical transmembrane segment spans residues 310–330; sequence AIDIWMAVCLLFVFSALLEYA. At 331–425 the chain is on the cytoplasmic side; it reads AVNFVSRQHK…FIQRAKKIDK (95 aa). Positions 391–410 are disordered; sequence KGANNSNTTNPPPAPSKSPE. The helical transmembrane segment at 426–446 threads the bilayer; it reads ISRIGFPMAFLIFNMFYWIIY. The Extracellular portion of the chain corresponds to 447 to 457; that stretch reads KIVRREDVHNQ.

The protein belongs to the ligand-gated ion channel (TC 1.A.9) family. Glycine receptor (TC 1.A.9.3) subfamily. GLRA1 sub-subfamily. Interacts with GLRB to form heteropentameric channels; this is probably the predominant form in vivo. Heteropentamer composed of four GLRA1 subunits and one GLRB subunit. Heteropentamer composed of two GLRA1 and three GLRB. Heteropentamer composed of three GLRA1 and two GLRB. Homopentamer (in vitro). Both homopentamers and heteropentamers form functional ion channels, but their characteristics are subtly different. Detected on spinal cord neurons (at protein level). Detected in spinal cord.

The protein localises to the postsynaptic cell membrane. It is found in the synapse. Its subcellular location is the perikaryon. It localises to the cell projection. The protein resides in the dendrite. The protein localises to the cell membrane. The catalysed reaction is chloride(in) = chloride(out). Its activity is regulated as follows. Channel opening is triggered by extracellular glycine. Channel characteristics depend on the subunit composition; heteropentameric channels are activated by lower glycine levels and display faster desensitization. Functionally, subunit of heteromeric glycine-gated chloride channels. Plays an important role in the down-regulation of neuronal excitability. Contributes to the generation of inhibitory postsynaptic currents. Channel activity is potentiated by ethanol. Potentiation of channel activity by intoxicating levels of ethanol contribute to the sedative effects of ethanol. The polypeptide is Glycine receptor subunit alpha-1 (GLRA1) (Bos taurus (Bovine)).